We begin with the raw amino-acid sequence, 182 residues long: ATP-dependent protease subunit HslV (182 aa).

The active site involves threonine 12. Residues alanine 167, cysteine 170, and threonine 173 each contribute to the Na(+) site.

This sequence belongs to the peptidase T1B family. HslV subfamily. A double ring-shaped homohexamer of HslV is capped on each side by a ring-shaped HslU homohexamer. The assembly of the HslU/HslV complex is dependent on binding of ATP.

The protein localises to the cytoplasm. It carries out the reaction ATP-dependent cleavage of peptide bonds with broad specificity.. Its activity is regulated as follows. Allosterically activated by HslU binding. Protease subunit of a proteasome-like degradation complex believed to be a general protein degrading machinery. This chain is ATP-dependent protease subunit HslV, found in Chlorobium phaeovibrioides (strain DSM 265 / 1930) (Prosthecochloris vibrioformis (strain DSM 265)).